Reading from the N-terminus, the 48-residue chain is ATP synthase protein 8 (48 aa).

Position 1 is an N-formylmethionine (Met1). Over 1–12 (MPQLIPFFFLNQ) the chain is Mitochondrial intermembrane. The chain crosses the membrane as a helical span at residues 13–33 (LFYGYLALFALLVLVSWVILP). Residues 34–48 (YLLQLQIVRLLITKL) are Mitochondrial matrix-facing.

As to quaternary structure, F-type ATP synthases have 2 components, the catalytic core F(1) and the membrane-embedded component F(0), linked together by a central stalk and a peripheral stalk. The central stalk, also called rotor shaft, is often seen as part of F(1). The peripheral stalk is seen as part of F(0). F(0) contains the membrane channel next to the rotor. F-type ATP synthases form dimers but each monomer functions independently in ATP generation. The dimer consists of 18 different polypeptides: ATP1 (subunit alpha, part of F(1), 3 molecules per monomer), ATP2 (subunit beta, part of F(1), 3 molecules per monomer), ATP3 (subunit gamma, part of the central stalk), ATP4 (subunit b, part of the peripheral stalk), ATP5/OSCP (subunit 5/OSCP, part of the peripheral stalk), ATP6 (subunit a, part of the peripheral stalk), ATP7 (subunit d, part of the peripheral stalk), ATP8 (subunit 8, part of the peripheral stalk), OLI1 (subunit c, part of the rotor, 10 molecules per monomer), ATP14 (subunit h, part of the peripheral stalk), ATP15 (subunit epsilon, part of the central stalk), ATP16 (subunit delta, part of the central stalk), ATP17 (subunit f, part of the peripheral stalk), ATP18 (subunit i/j, part of the peripheral stalk). Dimer-specific subunits are ATP19 (subunit k, at interface between monomers), ATP20 (subunit g, at interface between monomers), TIM11 (subunit e, at interface between monomers). Also contains subunit L.

Its subcellular location is the mitochondrion inner membrane. Its function is as follows. Mitochondrial membrane ATP synthase (F(1)F(0) ATP synthase or Complex V) produces ATP from ADP in the presence of a proton gradient across the membrane which is generated by electron transport complexes of the respiratory chain. F-type ATP synthases consist of two structural domains, F(1) - containing the extramembraneous catalytic core, and F(0) - containing the membrane proton channel, linked together by a central stalk and a peripheral stalk. During catalysis, ATP synthesis in the catalytic domain of F(1) is coupled via a rotary mechanism of the central stalk subunits to proton translocation. Part of the complex F(0) domain. Minor subunit located with subunit a/ATP6 in the membrane. The chain is ATP synthase protein 8 from Pichia angusta (Yeast).